Here is a 110-residue protein sequence, read N- to C-terminus: Hydrogenase maturation factor HypA (110 aa).

His2 serves as a coordination point for Ni(2+). Zn(2+)-binding residues include Cys70, Cys73, Cys86, and Cys89.

The protein belongs to the HypA/HybF family.

Functionally, involved in the maturation of [NiFe] hydrogenases. Required for nickel insertion into the metal center of the hydrogenase. This Geobacter sulfurreducens (strain ATCC 51573 / DSM 12127 / PCA) protein is Hydrogenase maturation factor HypA.